The sequence spans 120 residues: UPF0102 protein TWT_455 (120 aa).

This sequence belongs to the UPF0102 family.

This Tropheryma whipplei (strain Twist) (Whipple's bacillus) protein is UPF0102 protein TWT_455.